Here is a 162-residue protein sequence, read N- to C-terminus: Interleukin-15 (162 aa).

The first 29 residues, 1–29 (MRISKPHLRITSIQCYVCLLLNTHFLTEA), serve as a signal peptide directing secretion. A propeptide spanning residues 30–48 (GIRVFILGCISAGIPKTEA) is cleaved from the precursor. Intrachain disulfides connect Cys-83–Cys-133 and Cys-90–Cys-136. N-linked (GlcNAc...) asparagine glycans are attached at residues Asn-119, Asn-127, and Asn-143.

It belongs to the IL-15/IL-21 family.

The protein localises to the secreted. Cytokine that plays a major role in the development of inflammatory and protective immune responses to microbial invaders and parasites by modulating immune cells of both the innate and adaptive immune systems. Stimulates the proliferation of natural killer cells, T-cells and B-cells and promotes the secretion of several cytokines. In monocytes, induces the production of IL8 and monocyte chemotactic protein 1/CCL2, two chemokines that attract neutrophils and monocytes respectively to sites of infection. Unlike most cytokines, which are secreted in soluble form, IL15 is expressed in association with its high affinity IL15RA on the surface of IL15-producing cells and delivers signals to target cells that express IL2RB and IL2RG receptor subunits. Binding to its receptor triggers the phosphorylation of JAK1 and JAK3 and the recruitment and subsequent phosphorylation of signal transducer and activator of transcription-3/STAT3 and STAT5. In mast cells, induces the rapid tyrosine phosphorylation of STAT6 and thereby controls mast cell survival and release of cytokines such as IL4. The polypeptide is Interleukin-15 (IL15) (Marmota himalayana (Himalayan marmot)).